A 318-amino-acid polypeptide reads, in one-letter code: Ribonuclease Z (318 aa).

His63, His65, Asp67, His68, His142, Asp210, and His268 together coordinate Zn(2+). Asp67 acts as the Proton acceptor in catalysis.

The protein belongs to the RNase Z family. Homodimer. It depends on Zn(2+) as a cofactor.

It carries out the reaction Endonucleolytic cleavage of RNA, removing extra 3' nucleotides from tRNA precursor, generating 3' termini of tRNAs. A 3'-hydroxy group is left at the tRNA terminus and a 5'-phosphoryl group is left at the trailer molecule.. Zinc phosphodiesterase, which displays some tRNA 3'-processing endonuclease activity. Probably involved in tRNA maturation, by removing a 3'-trailer from precursor tRNA. This is Ribonuclease Z from Thermobifida fusca (strain YX).